Here is a 61-residue protein sequence, read N- to C-terminus: MAKKSMIAKQQRKQKFKVQEYTRCERCGRPHSVIRKFKLCRICFRELAYKGQIPGVKKASW.

C24, C27, C40, and C43 together coordinate Zn(2+).

It belongs to the universal ribosomal protein uS14 family. Zinc-binding uS14 subfamily. Part of the 30S ribosomal subunit. Contacts proteins S3 and S10. The cofactor is Zn(2+).

Binds 16S rRNA, required for the assembly of 30S particles and may also be responsible for determining the conformation of the 16S rRNA at the A site. The polypeptide is Small ribosomal subunit protein uS14 (Macrococcus caseolyticus (strain JCSC5402) (Macrococcoides caseolyticum)).